The primary structure comprises 364 residues: SH3 and cysteine-rich domain-containing protein 3 (364 aa).

Disordered stretches follow at residues M1–P89 and N189–P244. The span at Y64 to P78 shows a compositional bias: acidic residues. The Phorbol-ester/DAG-type zinc finger occupies P89–C140. Over residues E212 to K242 the composition is skewed to basic and acidic residues. 2 SH3 domains span residues Q247 to A306 and G307 to I364.

In terms of assembly, interacts (via SH3 domains) with the calcium channels CACNA1S and CACNA1C. Component of a calcium channel complex with CACNA1S and CACNB1. Component of a calcium channel complex with CACNA1C and CACNB1.

The protein localises to the cytoplasm. It is found in the cell membrane. Its subcellular location is the sarcolemma. It localises to the T-tubule. Its function is as follows. Required for normal excitation-contraction coupling in skeletal muscle and for normal muscle contraction in response to membrane depolarization. Required for normal Ca(2+) release from the sarcplasmic reticulum, which ultimately leads to muscle contraction. Probably functions via its effects on muscle calcium channels. Increases CACNA1S channel activity, in addition to its role in enhancing the expression of CACNA1S at the cell membrane. Has a redundant role in promoting the expression of the calcium channel CACNA1S at the cell membrane. Slows down the inactivation rate of the calcium channel CACNA1C. This Homo sapiens (Human) protein is SH3 and cysteine-rich domain-containing protein 3 (STAC3).